Consider the following 82-residue polypeptide: Small ribosomal subunit protein bS16 (82 aa).

The protein belongs to the bacterial ribosomal protein bS16 family.

The protein is Small ribosomal subunit protein bS16 of Dehalococcoides mccartyi (strain ATCC BAA-2100 / JCM 16839 / KCTC 5957 / BAV1).